A 187-amino-acid polypeptide reads, in one-letter code: UPF0301 protein Shewmr7_1270 (187 aa).

It belongs to the UPF0301 (AlgH) family.

This is UPF0301 protein Shewmr7_1270 from Shewanella sp. (strain MR-7).